The primary structure comprises 373 residues: Chaperone protein DnaJ (373 aa).

The 66-residue stretch at D5–G70 folds into the J domain. The CR-type zinc finger occupies G132–T214. Zn(2+) contacts are provided by C145, C148, C162, C165, C188, C191, C202, and C205. CXXCXGXG motif repeat units lie at residues C145–G152, C162–G169, C188–G195, and C202–G209.

It belongs to the DnaJ family. Homodimer. The cofactor is Zn(2+).

The protein resides in the cytoplasm. Participates actively in the response to hyperosmotic and heat shock by preventing the aggregation of stress-denatured proteins and by disaggregating proteins, also in an autonomous, DnaK-independent fashion. Unfolded proteins bind initially to DnaJ; upon interaction with the DnaJ-bound protein, DnaK hydrolyzes its bound ATP, resulting in the formation of a stable complex. GrpE releases ADP from DnaK; ATP binding to DnaK triggers the release of the substrate protein, thus completing the reaction cycle. Several rounds of ATP-dependent interactions between DnaJ, DnaK and GrpE are required for fully efficient folding. Also involved, together with DnaK and GrpE, in the DNA replication of plasmids through activation of initiation proteins. This is Chaperone protein DnaJ from Clostridium botulinum (strain Alaska E43 / Type E3).